The primary structure comprises 167 residues: Putative 4-hydroxy-4-methyl-2-oxoglutarate aldolase (167 aa).

Residues 81–84 (GDII) and arginine 103 contribute to the substrate site. Residue aspartate 104 coordinates a divalent metal cation.

It belongs to the class II aldolase/RraA-like family. As to quaternary structure, homotrimer. Requires a divalent metal cation as cofactor.

The enzyme catalyses 4-hydroxy-4-methyl-2-oxoglutarate = 2 pyruvate. The catalysed reaction is oxaloacetate + H(+) = pyruvate + CO2. Catalyzes the aldol cleavage of 4-hydroxy-4-methyl-2-oxoglutarate (HMG) into 2 molecules of pyruvate. Also contains a secondary oxaloacetate (OAA) decarboxylase activity due to the common pyruvate enolate transition state formed following C-C bond cleavage in the retro-aldol and decarboxylation reactions. This Corynebacterium jeikeium (strain K411) protein is Putative 4-hydroxy-4-methyl-2-oxoglutarate aldolase.